A 529-amino-acid chain; its full sequence is Glycerol kinase 5 (529 aa).

Residues Thr-22 and Thr-23 each contribute to the ATP site. 3 residues coordinate glycerol: Arg-92, Asp-269, and Gln-270. Residues Thr-291, Gly-334, and Gly-434 each coordinate ATP.

Belongs to the FGGY kinase family.

It is found in the cytoplasm. The catalysed reaction is glycerol + ATP = sn-glycerol 3-phosphate + ADP + H(+). It participates in polyol metabolism; glycerol degradation via glycerol kinase pathway; sn-glycerol 3-phosphate from glycerol: step 1/1. Functionally, skin-specific kinase that plays a key role in glycerol metabolism, catalyzing its phosphorylation to produce sn-glycerol 3-phosphate. Involved in skin-specific regulation of sterol regulatory element-binding protein (SREBP) processing and lipid biosynthesis. This is Glycerol kinase 5 (gk5) from Danio rerio (Zebrafish).